Here is a 709-residue protein sequence, read N- to C-terminus: Translation initiation factor IF-2 (709 aa).

2 stretches are compositionally biased toward basic and acidic residues: residues 47-70 (DHQY…EKPK) and 105-121 (KGKE…EKKL). The segment at 47-157 (DHQYRPNTGK…QPAKKEKELP (111 aa)) is disordered. Over residues 125 to 137 (AKKKGKGPAKGKK) the composition is skewed to basic residues. Low complexity predominate over residues 138 to 149 (QAAPAAKQAPQP). The tr-type G domain maps to 240–409 (ERPPVVTIMG…LLVSEMEELK (170 aa)). Residues 249–256 (GHVDHGKT) form a G1 region. 249-256 (GHVDHGKT) is a GTP binding site. The tract at residues 274–278 (GITQH) is G2. Positions 295–298 (DTPG) are G3. Residues 295–299 (DTPGH) and 349–352 (NKID) each bind GTP. Positions 349–352 (NKID) are G4. A G5 region spans residues 385–387 (SAK).

This sequence belongs to the TRAFAC class translation factor GTPase superfamily. Classic translation factor GTPase family. IF-2 subfamily.

It is found in the cytoplasm. Its function is as follows. One of the essential components for the initiation of protein synthesis. Protects formylmethionyl-tRNA from spontaneous hydrolysis and promotes its binding to the 30S ribosomal subunits. Also involved in the hydrolysis of GTP during the formation of the 70S ribosomal complex. The protein is Translation initiation factor IF-2 of Geobacillus kaustophilus (strain HTA426).